Reading from the N-terminus, the 304-residue chain is Murein tetrapeptide carboxypeptidase (304 aa).

Serine 106 functions as the Nucleophile in the catalytic mechanism. Catalysis depends on charge relay system residues glutamate 200 and histidine 270.

Belongs to the peptidase S66 family.

The protein localises to the cytoplasm. The catalysed reaction is N-acetyl-D-glucosaminyl-N-acetylmuramoyl-L-alanyl-meso-2,6-diaminoheptanedioyl-D-alanine + H2O = N-acetyl-D-glucosaminyl-N-acetylmuramoyl-L-alanyl-meso-2,6-diaminoheptanedioate + D-alanine. The protein operates within cell wall biogenesis; peptidoglycan recycling. Its activity is regulated as follows. Inhibited by beta-lactams containing a D-amino acid side chain. Its function is as follows. Releases the terminal D-alanine residue from the cytoplasmic tetrapeptide recycling product L-Ala-gamma-D-Glu-meso-Dap-D-Ala. To a lesser extent, can also cleave D-Ala from murein derivatives containing the tetrapeptide, i.e. MurNAc-tetrapeptide, UDP-MurNAc-tetrapeptide, GlcNAc-MurNAc-tetrapeptide, and GlcNAc-anhMurNAc-tetrapeptide. Does not act on murein sacculi or cross-linked muropeptides. The tripeptides produced by the LcdA reaction can then be reused as peptidoglycan building blocks; LcdA is thereby involved in murein recycling. Is also essential for viability during stationary phase. The protein is Murein tetrapeptide carboxypeptidase (ldcA) of Escherichia coli (strain K12).